We begin with the raw amino-acid sequence, 278 residues long: Digeranylgeranylglyceryl phosphate synthase (278 aa).

Helical transmembrane passes span 17 to 37 (MASF…LEMV), 40 to 60 (LIFA…LNDI), 91 to 111 (LLVF…LMAV), 129 to 149 (IIGN…GGIA), 153 to 173 (IDVT…REII), 204 to 224 (LLLV…FFGI), 226 to 246 (YLIS…PLLI), and 257 to 277 (SRNI…GSFF).

Belongs to the UbiA prenyltransferase family. DGGGP synthase subfamily. Requires Mg(2+) as cofactor.

It is found in the cell membrane. The catalysed reaction is sn-3-O-(geranylgeranyl)glycerol 1-phosphate + (2E,6E,10E)-geranylgeranyl diphosphate = 2,3-bis-O-(geranylgeranyl)-sn-glycerol 1-phosphate + diphosphate. It functions in the pathway membrane lipid metabolism; glycerophospholipid metabolism. Prenyltransferase that catalyzes the transfer of the geranylgeranyl moiety of geranylgeranyl diphosphate (GGPP) to the C2 hydroxyl of (S)-3-O-geranylgeranylglyceryl phosphate (GGGP). This reaction is the second ether-bond-formation step in the biosynthesis of archaeal membrane lipids. This Methanococcus maripaludis (strain C5 / ATCC BAA-1333) protein is Digeranylgeranylglyceryl phosphate synthase.